A 496-amino-acid chain; its full sequence is DEAD-box ATP-dependent RNA helicase 38 (496 aa).

Residues Met-1 to Ser-91 are disordered. Ala-2 carries the post-translational modification N-acetylalanine. Positions Lys-7–Ser-25 are enriched in low complexity. Basic and acidic residues predominate over residues Glu-27 to Asp-40. A compositionally biased stretch (acidic residues) spans Val-41 to Val-51. A compositionally biased stretch (polar residues) spans Lys-78–Ser-91. The Q motif motif lies at Ser-91–Ala-120. The Helicase ATP-binding domain maps to Met-125–Leu-301. Position 138 to 145 (Ala-138 to Thr-145) interacts with ATP. The DEAD box signature appears at Asp-245–Asp-248. Positions Val-329–Glu-483 constitute a Helicase C-terminal domain.

This sequence belongs to the DEAD box helicase family. DDX19/DBP5 subfamily. In terms of assembly, interacts with NUP214 (via N-terminus). Constitutively expressed.

The protein resides in the cytoplasm. Its subcellular location is the nucleus. The catalysed reaction is ATP + H2O = ADP + phosphate + H(+). ATP-dependent RNA helicase essential for mRNA export from the nucleus. Plays an important role in the positive regulation of CBF/DREB transcription factors. This Arabidopsis thaliana (Mouse-ear cress) protein is DEAD-box ATP-dependent RNA helicase 38 (RH38).